The sequence spans 29 residues: Orphan peptide CllNtx (29 aa).

Contains 3 disulfide bonds. As to expression, expressed by the venom gland.

The protein resides in the secreted. Functionally, may act as a toxin. In Centruroides limpidus (Mexican scorpion), this protein is Orphan peptide CllNtx.